Here is an 88-residue protein sequence, read N- to C-terminus: Small ribosomal subunit protein bS16c (88 aa).

This sequence belongs to the bacterial ribosomal protein bS16 family.

Its subcellular location is the plastid. The protein localises to the chloroplast. The polypeptide is Small ribosomal subunit protein bS16c (Jasminum nudiflorum (Winter jasmine)).